A 690-amino-acid polypeptide reads, in one-letter code: Iron-sulfur clusters transporter ATM1, mitochondrial (690 aa).

The N-terminal 26 residues, 1–26, are a transit peptide targeting the mitochondrion; sequence MLLLPRCPVIGRIVRSKFRSGLIRNH. Residues 27-110 are Mitochondrial matrix-facing; it reads SPVIFTVSKL…PKGNNKVRIR (84 aa). Residues 111 to 132 traverse the membrane as a helical segment; sequence VLIALGLLISAKILNVQVPFFF. In terms of domain architecture, ABC transmembrane type-1 spans 111–401; that stretch reads VLIALGLLIS…LGSVYRDLKQ (291 aa). The Mitochondrial intermembrane portion of the chain corresponds to 133-155; it reads KQTIDSMNIAWDDPTVALPAAIG. The helical transmembrane segment at 156-179 threads the bilayer; sequence LTILCYGVARFGSVLFGELRNAVF. Topologically, residues 180 to 228 are mitochondrial matrix; the sequence is AKVAQNAIRTVSLQTFQHLMKLDLGWHLSRQTGGLTRAMDRGTKGISQV. The chain crosses the membrane as a helical span at residues 229-252; that stretch reads LTAMVFHIIPISFEISVVCGILTY. Residue Gln253 is a topological domain, mitochondrial intermembrane. The helical transmembrane segment at 254–274 threads the bilayer; the sequence is FGASFAAITFSTMLLYSIFTI. Topologically, residues 275-340 are mitochondrial matrix; that stretch reads KTTAWRTHFR…SQIKVSQSLA (66 aa). Residues 280-284 and 343-346 contribute to the glutathione site; these read RTHFR and NSGQ. A helical membrane pass occupies residues 341-359; it reads FLNSGQNLIFTTALTAMMY. Topologically, residues 360-374 are mitochondrial intermembrane; sequence MGCTGVIGGNLTVGD. A helical transmembrane segment spans residues 375–396; that stretch reads LVLINQLVFQLSVPLNFLGSVY. Gly393 is a glutathione binding site. Residues 397–690 are Mitochondrial matrix-facing; sequence RDLKQSLIDM…ENELKDQQEL (294 aa). The ABC transporter domain maps to 436–672; that stretch reads ITFENVTFGY…PGSLYRELWT (237 aa). Residues Tyr445 and 469 to 480 each bind ATP; that span reads GSSGSGKSTILK.

The protein belongs to the ABC transporter superfamily. ABCB family. Heavy Metal importer (TC 3.A.1.210) subfamily. Homodimer.

It is found in the mitochondrion inner membrane. Functionally, performs an essential function in the generation of cytoplasmic iron-sulfur proteins by mediating the ATP-dependent export of Fe/S cluster precursors synthesized by NFS1 and other mitochondrial proteins. Hydrolyzes ATP. Binds glutathione and may function by transporting a glutathione-conjugated iron-sulfur compound. The sequence is that of Iron-sulfur clusters transporter ATM1, mitochondrial from Saccharomyces cerevisiae (strain ATCC 204508 / S288c) (Baker's yeast).